Consider the following 97-residue polypeptide: Aspartyl/glutamyl-tRNA(Asn/Gln) amidotransferase subunit C (97 aa).

Belongs to the GatC family. In terms of assembly, heterotrimer of A, B and C subunits.

It catalyses the reaction L-glutamyl-tRNA(Gln) + L-glutamine + ATP + H2O = L-glutaminyl-tRNA(Gln) + L-glutamate + ADP + phosphate + H(+). It carries out the reaction L-aspartyl-tRNA(Asn) + L-glutamine + ATP + H2O = L-asparaginyl-tRNA(Asn) + L-glutamate + ADP + phosphate + 2 H(+). Allows the formation of correctly charged Asn-tRNA(Asn) or Gln-tRNA(Gln) through the transamidation of misacylated Asp-tRNA(Asn) or Glu-tRNA(Gln) in organisms which lack either or both of asparaginyl-tRNA or glutaminyl-tRNA synthetases. The reaction takes place in the presence of glutamine and ATP through an activated phospho-Asp-tRNA(Asn) or phospho-Glu-tRNA(Gln). The chain is Aspartyl/glutamyl-tRNA(Asn/Gln) amidotransferase subunit C from Anaeromyxobacter sp. (strain K).